A 160-amino-acid chain; its full sequence is SsrA-binding protein (160 aa).

Belongs to the SmpB family.

It localises to the cytoplasm. Functionally, required for rescue of stalled ribosomes mediated by trans-translation. Binds to transfer-messenger RNA (tmRNA), required for stable association of tmRNA with ribosomes. tmRNA and SmpB together mimic tRNA shape, replacing the anticodon stem-loop with SmpB. tmRNA is encoded by the ssrA gene; the 2 termini fold to resemble tRNA(Ala) and it encodes a 'tag peptide', a short internal open reading frame. During trans-translation Ala-aminoacylated tmRNA acts like a tRNA, entering the A-site of stalled ribosomes, displacing the stalled mRNA. The ribosome then switches to translate the ORF on the tmRNA; the nascent peptide is terminated with the 'tag peptide' encoded by the tmRNA and targeted for degradation. The ribosome is freed to recommence translation, which seems to be the essential function of trans-translation. The chain is SsrA-binding protein from Haemophilus ducreyi (strain 35000HP / ATCC 700724).